The sequence spans 748 residues: ATP-dependent rRNA helicase SPB4 (748 aa).

The Q motif motif lies at 15-43 (WAKLNPPLSPWILDVINSMGFKNMTPVQA). Positions 46 to 260 (IPRAVKNQDC…GLGLRNPVRI (215 aa)) constitute a Helicase ATP-binding domain. 59–66 (AVTGSGKT) is a binding site for ATP. The segment at 119–156 (ESEEETGDVEAHAPPFASSSRSPSPQTPDKPLFPLPML) is disordered. Low complexity predominate over residues 132 to 142 (PPFASSSRSPS). Over residues 143 to 152 (PQTPDKPLFP) the composition is skewed to pro residues. The short motif at 207-210 (DEAD) is the DEAD box element. Positions 295 to 460 (KTLQLIRLLL…KAQRSILDFL (166 aa)) constitute a Helicase C-terminal domain. The disordered stretch occupies residues 614-748 (AQRADNQSSN…IGGGMFDDLE (135 aa)). 2 stretches are compositionally biased toward basic and acidic residues: residues 626 to 669 (ARAE…KYEW) and 708 to 730 (EIGK…KESS). Gly residues predominate over residues 732 to 748 (GGAGGGGIGGGMFDDLE).

Belongs to the DEAD box helicase family. DDX55/SPB4 subfamily. As to quaternary structure, component of pre-60S ribosomal complexes.

It is found in the nucleus. Its subcellular location is the nucleolus. It catalyses the reaction ATP + H2O = ADP + phosphate + H(+). In terms of biological role, ATP-binding RNA helicase involved in the biogenesis of 60S ribosomal subunits. Binds 90S pre-ribosomal particles and dissociates from pre-60S ribosomal particles after processing of 27SB pre-rRNA. Required for the normal formation of 18S rRNA through the processing of pre-rRNAs at sites A0, A1 and A2, and the normal formation of 25S and 5.8S rRNAs through the processing of pre-rRNAs at sites C1 and C2. This Cryptococcus neoformans var. neoformans serotype D (strain B-3501A) (Filobasidiella neoformans) protein is ATP-dependent rRNA helicase SPB4.